Here is a 756-residue protein sequence, read N- to C-terminus: MESTPFNRQQWTSLSLRVTAKELSLVNKNKSSAIVEIFSKYQKAAEEANMEKRRSNTENLPQHFRRGNLTVLKKKWENPAPGVESLPESTRNSSAEVRHRGDPPPAEVASSSASGVEADQGVCPRPRFSSPPEVPYPNPRIKDTEHLKDHSAESKKMENCLAESRHEVGKPETSENAEASNKIEKYNVPLNRLKMMFERGEPAQTKILRAQSRSTGGRKISENSYSLDDLEIGPGQLSSSAFNTEKSESRRNLEFPRLSDTSIKDRMAKYQAAVSKQSSSTNYTNELKANGGEIKTHKLEQKENVPPGPEVCISHQDGEKVSASENSLAACSTPPEDDSCKSQVKSDVQQPVHPKPLSPVARASSLSESSPPKAVKKFQAPARETCVECQKTVYPMERLLANQQVFHISCFRCSYCNNKLSLGTYASLHGRIYCKPHFNQLFKSKGNYDEGFGHRPHKDLWASKLENEETLERPAQLPNAAEIPQSPGVEDAPIAKVGVLTASMEAKASSQLEKEDKPAETKKLRIAWPPPTELSSSGSALEEGIKVSKPKWPPEDEVSKPEAPEDVDLDLKKLRRSSSLKERSRPFTVAASFRTASVKSPKPLSPPMRKGWSLSEQSEEFGGGVAAERKQMEKASASEKNGSVGKTTWPSKESRGGEAAGRSKEVQDFEIGSENLIENGASLDEGDRDLLQQQSPLEPKSKNWSSFADNTSAKEFTTQKQKSQDVEFWEGEVVEELSVEEQIKRNRYYDEEEDEE.

The residue at position 1 (Met-1) is an N-acetylmethionine. 2 positions are modified to phosphoserine: Ser-15 and Ser-55. Over residues 44-56 the composition is skewed to basic and acidic residues; the sequence is AAEEANMEKRRSN. Disordered regions lie at residues 44–183 and 204–377; these read AAEE…SNKI and QTKI…AVKK. Residues 107-118 show a composition bias toward low complexity; sequence EVASSSASGVEA. Ser-130 carries the phosphoserine modification. Residues 140 to 173 show a composition bias toward basic and acidic residues; sequence RIKDTEHLKDHSAESKKMENCLAESRHEVGKPET. Residues 164 to 166 carry the Required for interaction with NPC1L1 motif; sequence SRH. Ser-221 is subject to Phosphoserine. A Phosphotyrosine modification is found at Tyr-225. A phosphoserine mark is found at Ser-226 and Ser-238. Basic and acidic residues predominate over residues 245–254; sequence EKSESRRNLE. Ser-259 is subject to Phosphoserine. The span at 274 to 287 shows a compositional bias: polar residues; that stretch reads VSKQSSSTNYTNEL. Residues 294–303 show a composition bias toward basic and acidic residues; that stretch reads IKTHKLEQKE. Residues Ser-339, Ser-346, Ser-358, Ser-365, and Ser-370 each carry the phosphoserine modification. The LIM zinc-binding domain maps to 384 to 444; sequence ETCVECQKTV…KPHFNQLFKS (61 aa). At Lys-435 the chain carries N6-succinyllysine. Ser-486 bears the Phosphoserine mark. The tract at residues 489 to 509 is required for interaction with MYO5B; the sequence is VEDAPIAKVGVLTASMEAKAS. The interval 508 to 726 is disordered; that stretch reads ASSQLEKEDK…TTQKQKSQDV (219 aa). Over residues 512-523 the composition is skewed to basic and acidic residues; it reads LEKEDKPAETKK. A compositionally biased stretch (low complexity) spans 533–542; it reads ELSSSGSALE. Basic and acidic residues predominate over residues 552-563; that stretch reads WPPEDEVSKPEA. Phosphoserine occurs at positions 597, 600, 605, and 613. Over residues 627 to 637 the composition is skewed to basic and acidic residues; that stretch reads AERKQMEKASA. Polar residues predominate over residues 638 to 651; sequence SEKNGSVGKTTWPS. The segment covering 652–667 has biased composition (basic and acidic residues); sequence KESRGGEAAGRSKEVQ. Positions 691–721 are enriched in polar residues; the sequence is LQQQSPLEPKSKNWSSFADNTSAKEFTTQKQ. Phosphoserine occurs at positions 695, 723, and 738.

Interacts with NPC1L1; bridges NPC1L1 with MYO5B. Interacts with MYO5B; bridges MYO5B with NPC1L1. Interacts with PXN; this complex stabilizes actin dynamics. Interacts with F-actin and G-actin. Interacts with LUZP1 (via C-terminus); both proteins restrict ciliation and may work together to regulate this process. Binds RAB40B (GTP-bound); interaction influences LIMA1 subcellular localization in lamellipodia during cell migration. Post-translationally, phosphorylation of the C-terminal region by MAPK1/MAPK3 reduces its association with F-actin and contributes to actin filament reorganization and enhances cell motility. In terms of processing, ubiquitinated by the ECS(RAB40B) complex leading to its degradation. As to expression, widely expressed. Highest levels of isoform 2 are expressed in lung, spleen and small intestine. Isoform 2 is expressed at higher levels than isoform 1 in most tissues except liver, fat and kidney. Isoform 1 and isoform 2 are expressed at low levels in skeletal muscle, heart, stomach and lymph.

The protein localises to the cytoplasm. It is found in the cell junction. The protein resides in the focal adhesion. Its subcellular location is the cytoskeleton. It localises to the stress fiber. The protein localises to the cell membrane. It is found in the cell projection. The protein resides in the ruffle. Its subcellular location is the lamellipodium. Actin-binding protein involved in actin cytoskeleton regulation and dynamics. Increases the number and size of actin stress fibers and inhibits membrane ruffling. Inhibits actin filament depolymerization. Bundles actin filaments, delays filament nucleation and reduces formation of branched filaments. Acts as a negative regulator of primary cilium formation. Plays a role in cholesterol homeostasis. Influences plasma cholesterol levels through regulation of intestinal cholesterol absorption. May act as a scaffold protein by regulating NPC1L1 transportation, an essential protein for cholesterol absorption, to the plasma membrane by recruiting MYO5B to NPC1L1, and thus facilitates cholesterol uptake. The protein is LIM domain and actin-binding protein 1 of Sus scrofa (Pig).